The primary structure comprises 501 residues: Phosphoethanolamine N-methyltransferase 1 (501 aa).

Residues Gly-72, Arg-77, Asp-93, Asp-118, Val-119, and Asn-137 each coordinate S-adenosyl-L-homocysteine. Residues Ser-170, Thr-175, Gly-176, Arg-180, and Tyr-187 each contribute to the phosphocholine site. N-methylethanolamine phosphate contacts are provided by residues 256–257 (QY) and Tyr-265. Position 265 (Tyr-265) interacts with phosphocholine. S-adenosyl-L-homocysteine contacts are provided by Val-274, Ser-275, Gly-301, Asp-323, Asp-349, Cys-350, and Arg-366. Tyr-397, Tyr-411, Arg-415, Tyr-417, and Lys-483 together coordinate phosphocholine. N-methylethanolamine phosphate is bound by residues Tyr-397, Tyr-411, 415–417 (RGY), and Lys-483.

The protein belongs to the class I-like SAM-binding methyltransferase superfamily. PEAMT family.

It carries out the reaction phosphoethanolamine + S-adenosyl-L-methionine = N-methylethanolamine phosphate + S-adenosyl-L-homocysteine + H(+). It catalyses the reaction N-methylethanolamine phosphate + S-adenosyl-L-methionine = N,N-dimethylethanolamine phosphate + S-adenosyl-L-homocysteine + H(+). The enzyme catalyses N,N-dimethylethanolamine phosphate + S-adenosyl-L-methionine = phosphocholine + S-adenosyl-L-homocysteine + H(+). The protein operates within phospholipid metabolism; phosphatidylcholine biosynthesis; phosphocholine from phosphoethanolamine: step 1/1. Involved in phosphocholine biosynthesis. Catalyzes the N-methylation of phosphoethanolamine, phosphomonomethylethanolamine and phosphodimethylethanolamine, the three methylation steps required to convert phosphoethanolamine to phosphocholine (PC). May be involved in root development. This chain is Phosphoethanolamine N-methyltransferase 1, found in Zea mays (Maize).